Here is a 195-residue protein sequence, read N- to C-terminus: Peptidyl-tRNA hydrolase (195 aa).

A tRNA-binding site is contributed by Y17. Catalysis depends on H22, which acts as the Proton acceptor. TRNA is bound by residues Y68, N70, and N116.

It belongs to the PTH family. In terms of assembly, monomer.

The protein resides in the cytoplasm. It catalyses the reaction an N-acyl-L-alpha-aminoacyl-tRNA + H2O = an N-acyl-L-amino acid + a tRNA + H(+). In terms of biological role, hydrolyzes ribosome-free peptidyl-tRNAs (with 1 or more amino acids incorporated), which drop off the ribosome during protein synthesis, or as a result of ribosome stalling. Its function is as follows. Catalyzes the release of premature peptidyl moieties from peptidyl-tRNA molecules trapped in stalled 50S ribosomal subunits, and thus maintains levels of free tRNAs and 50S ribosomes. This Shewanella baltica (strain OS155 / ATCC BAA-1091) protein is Peptidyl-tRNA hydrolase.